Reading from the N-terminus, the 639-residue chain is 1-deoxy-D-xylulose-5-phosphate synthase (639 aa).

Thiamine diphosphate is bound by residues His79 and 120 to 122; that span reads AHS. Asp151 is a binding site for Mg(2+). Residues 152–153, Asn180, Tyr289, and Glu371 contribute to the thiamine diphosphate site; that span reads GA. Residue Asn180 participates in Mg(2+) binding.

Belongs to the transketolase family. DXPS subfamily. Homodimer. Mg(2+) serves as cofactor. Thiamine diphosphate is required as a cofactor.

The enzyme catalyses D-glyceraldehyde 3-phosphate + pyruvate + H(+) = 1-deoxy-D-xylulose 5-phosphate + CO2. The protein operates within metabolic intermediate biosynthesis; 1-deoxy-D-xylulose 5-phosphate biosynthesis; 1-deoxy-D-xylulose 5-phosphate from D-glyceraldehyde 3-phosphate and pyruvate: step 1/1. Functionally, catalyzes the acyloin condensation reaction between C atoms 2 and 3 of pyruvate and glyceraldehyde 3-phosphate to yield 1-deoxy-D-xylulose-5-phosphate (DXP). The chain is 1-deoxy-D-xylulose-5-phosphate synthase from Rhizorhabdus wittichii (strain DSM 6014 / CCUG 31198 / JCM 15750 / NBRC 105917 / EY 4224 / RW1) (Sphingomonas wittichii).